The primary structure comprises 361 residues: Palmitoyltransferase ZDHHC2 (361 aa).

Residues 1–15 are Cytoplasmic-facing; the sequence is MAPSGSRSFDCWRVL. A helical transmembrane segment spans residues 16–36; that stretch reads YWIPVLFISLIVAWSYYAYVV. At 37–50 the chain is on the lumenal side; that stretch reads QLCIETIENMGEKT. Residues 51–71 form a helical membrane-spanning segment; that stretch reads VYLLIYHLLFLMFVWSYWQTI. Topologically, residues 72–167 are cytoplasmic; that stretch reads YSKPMNPLKE…NNCVGFANYK (96 aa). A DHHC domain is found at 124 to 174; the sequence is RYCDRCLLLKPDRCHHCSACDMCILKMDHHCPWVNNCVGFANYKFFMLFLA. The S-palmitoyl cysteine intermediate role is filled by Cys154. The helical transmembrane segment at 168-188 threads the bilayer; it reads FFMLFLAYSLLYCLFVTATDM. The Lumenal portion of the chain corresponds to 189-207; sequence QYFIQFWTNGLPDTQAKFH. The chain crosses the membrane as a helical span at residues 208–228; sequence IMFLFFAASTFSVSLAFLFAY. Over 229-361 the chain is Cytoplasmic; it reads HCWLVCKNRS…NPALTIEKET (133 aa). The segment at 296–361 is mediates localization to plasma membrane and recycling endosomes; that stretch reads NPDPEQPSIP…NPALTIEKET (66 aa). The span at 299-308 shows a compositional bias: pro residues; sequence PEQPSIPPGR. Residues 299–361 are disordered; that stretch reads PEQPSIPPGR…NPALTIEKET (63 aa). The span at 331–340 shows a compositional bias: polar residues; it reads SRLLNNGQTD. The short motif at 333 to 334 is the Non-canonical dileucine endocytic signal element; sequence LL. The NPxY-like endocytic signal motif lies at 352–355; sequence NPAL.

The protein belongs to the DHHC palmitoyltransferase family. In terms of assembly, monomer. Homodimer. The monomeric form has a higher catalytic activity. In terms of processing, autopalmitoylated.

It localises to the endoplasmic reticulum membrane. The protein resides in the golgi apparatus membrane. The protein localises to the postsynaptic density. Its subcellular location is the postsynaptic recycling endosome membrane. It is found in the cell membrane. It catalyses the reaction L-cysteinyl-[protein] + hexadecanoyl-CoA = S-hexadecanoyl-L-cysteinyl-[protein] + CoA. It carries out the reaction L-cysteinyl-[protein] + tetradecanoyl-CoA = S-tetradecanoyl-L-cysteinyl-[protein] + CoA. The enzyme catalyses L-cysteinyl-[protein] + octadecanoyl-CoA = S-octadecanoyl-L-cysteinyl-[protein] + CoA. In terms of biological role, palmitoyltransferase that catalyzes the addition of palmitate onto various protein substrates and is involved in a variety of cellular processes. Has no stringent fatty acid selectivity and in addition to palmitate can also transfer onto target proteins myristate from tetradecanoyl-CoA and stearate from octadecanoyl-CoA. The protein is Palmitoyltransferase ZDHHC2 of Danio rerio (Zebrafish).